The chain runs to 163 residues: Probable RNA-binding protein EIF1AD (163 aa).

The S1-like domain maps to 18 to 96; that stretch reads MMEDDYELPT…VKAEISKILT (79 aa). The disordered stretch occupies residues 106–163; it reads AGIWPERFAKNPPQEAKAQNDDEDSDFEDDLTPNTNRPVQESDEEDEDTDTESSDEED. Composition is skewed to acidic residues over residues 126–136 and 146–163; these read DDEDSDFEDDL and ESDE…DEED.

The protein belongs to the EIF1AD family.

This Drosophila pseudoobscura pseudoobscura (Fruit fly) protein is Probable RNA-binding protein EIF1AD.